The primary structure comprises 560 residues: Nitrite reductase (560 aa).

An N-terminal signal peptide occupies residues 1-26 (MSNVGKPILAGLIAGLSLLGLAVAQA). The tract at residues 27 to 29 (AAP) is N-terminal tail. The Cytochrome c domain maps to 30–126 (EMTAEEKEAS…ARYIQHTPDI (97 aa)). Heme c is bound by residues C47, C50, and H51. Residues 61 to 80 (KNLEPHWSKTEADGKKTEGG) form a disordered region. Residues 63–78 (LEPHWSKTEADGKKTE) show a composition bias toward basic and acidic residues. Heme c is bound by residues T97 and M101. The tract at residues 127 to 560 (PPEFSLQDMK…NVFNTMNDVY (434 aa)) is D1-heme domain. The heme d1 site is built by H193, R236, S237, Y256, R382, and Q500.

Homodimer in solution. The cofactor is heme c. Requires heme as cofactor.

The protein localises to the periplasm. It catalyses the reaction nitric oxide + Fe(III)-[cytochrome c] + H2O = Fe(II)-[cytochrome c] + nitrite + 2 H(+). The enzyme catalyses A + NH4(+) + H2O = hydroxylamine + AH2 + H(+). This Stutzerimonas stutzeri (Pseudomonas stutzeri) protein is Nitrite reductase (nirS).